The sequence spans 188 residues: Protein crossbronx-like (188 aa).

The region spanning 15 to 174 is the UBC core domain; the sequence is KQGYHILAEY…ANQVVKLHCG (160 aa).

The protein belongs to the ubiquitin-conjugating enzyme family. FTS subfamily.

The chain is Protein crossbronx-like from Drosophila simulans (Fruit fly).